Reading from the N-terminus, the 259-residue chain is UPF0246 protein NGO_0461 (259 aa).

Belongs to the UPF0246 family.

In Neisseria gonorrhoeae (strain ATCC 700825 / FA 1090), this protein is UPF0246 protein NGO_0461.